A 433-amino-acid polypeptide reads, in one-letter code: Glutamate-1-semialdehyde 2,1-aminomutase (433 aa).

K273 carries the post-translational modification N6-(pyridoxal phosphate)lysine.

This sequence belongs to the class-III pyridoxal-phosphate-dependent aminotransferase family. HemL subfamily. In terms of assembly, homodimer. The cofactor is pyridoxal 5'-phosphate.

The protein localises to the cytoplasm. It catalyses the reaction (S)-4-amino-5-oxopentanoate = 5-aminolevulinate. Its pathway is porphyrin-containing compound metabolism; protoporphyrin-IX biosynthesis; 5-aminolevulinate from L-glutamyl-tRNA(Glu): step 2/2. The protein operates within porphyrin-containing compound metabolism; chlorophyll biosynthesis. The chain is Glutamate-1-semialdehyde 2,1-aminomutase (hemL) from Synechocystis sp. (strain ATCC 27184 / PCC 6803 / Kazusa).